A 282-amino-acid polypeptide reads, in one-letter code: Ribosome biogenesis GTPase A (282 aa).

Positions 14–178 (RREVTEKLKL…LLDTPGILWP (165 aa)) constitute a CP-type G domain. Residues 58–61 (NKAD), 86–87 (NS), 130–135 (NVGKST), and glycine 174 contribute to the GTP site.

This sequence belongs to the TRAFAC class YlqF/YawG GTPase family. MTG1 subfamily. As to quaternary structure, interacts with ctc. Interacts with the immature 50S ribosome subunit. 2 molecules of rbgA bind to one 50S subunit.

It localises to the cytoplasm. Its function is as follows. Essential protein that is required for a late step of 50S ribosomal subunit assembly. Has GTPase activity that is stimulated by interaction with the immature 50S ribosome subunit. Binds to the 23S rRNA. Required for the association of ribosomal proteins rplP and rpmA with the large subunit. This Bacillus pumilus (strain SAFR-032) protein is Ribosome biogenesis GTPase A.